Reading from the N-terminus, the 54-residue chain is Large ribosomal subunit protein bL33 (54 aa).

The protein belongs to the bacterial ribosomal protein bL33 family.

This is Large ribosomal subunit protein bL33 from Corynebacterium urealyticum (strain ATCC 43042 / DSM 7109).